Consider the following 116-residue polypeptide: Endoribonuclease toxin ChpB (116 aa).

Belongs to the PemK/MazF family. As to quaternary structure, homodimer, interacts with ChpS, which inhibits the endoribonuclease activity.

With respect to regulation, stimulated in vitro in a concentration-dependent fashion by extracellular death factor (EDF, a quorum sensing pentapeptide sequence NNWNN, probably produced from the zwf gene product glucose-6-phosphate 1-dehydrogenase), which is able to overcome inhibition by cognate antitoxin ChpS. Its function is as follows. Toxic component of a type II toxin-antitoxin (TA) system. ChpB is a sequence-specific mRNA and (weak) tmRNA endoribonuclease that inhibits protein synthesis and induces bacterial stasis. Cleavage is independent of the ribosome. Cleavage occurs at ACY sequences where Y is not C. The endoribonuclease activity is not as strong as that of MazF. The endoribonuclease activity (a toxin) is inhibited by its labile cognate antitoxin ChpS. Toxicity results when the levels of ChpS decrease in the cell, leading to mRNA degradation. Both ChpS and ChpB probably bind to the promoter region of the chpS-chpB operon to autoregulate their synthesis. The protein is Endoribonuclease toxin ChpB (chpB) of Escherichia coli (strain K12).